Here is a 111-residue protein sequence, read N- to C-terminus: MYDSIMSVSARNALSRLSETVAEKGVGSASAPQAVPAAPGASFGEVLSQMTGSVSQKLQAAEATSIQGIKGDAPVRDVVSSVMEAEQSLQTAIAIRDKIVQAYLEISRMPI.

The protein belongs to the FliE family.

It localises to the bacterial flagellum basal body. The protein is Flagellar hook-basal body complex protein FliE of Brucella abortus (strain S19).